Reading from the N-terminus, the 508-residue chain is Strychnine-11-hydroxylase (508 aa).

A helical transmembrane segment spans residues 5–25 (MSFLLLFSLCFLIHCFVFLLI). Residue Cys445 coordinates heme.

This sequence belongs to the cytochrome P450 family. It depends on heme as a cofactor.

It localises to the membrane. The catalysed reaction is beta-colubrine + reduced [NADPH--hemoprotein reductase] + O2 = 11-demethylbrucine + oxidized [NADPH--hemoprotein reductase] + H2O + H(+). It participates in alkaloid biosynthesis. Its function is as follows. Monooxygenase involved in the biosynthesis of curare monoterpene indole alkaloids (MIAs), natural products such as strychnine, a neurotoxic compound used as a pesticide to control rodents, and its pharmacologically active derivatives, including brucine, used to regulate blood pressure. Curare alkaloids act as animal glycine receptor antagonists. Catalyzes the conversion of beta-colubrine to 11-deMe brucine. This is Strychnine-11-hydroxylase from Strychnos nux-vomica (Poison nut).